A 227-amino-acid chain; its full sequence is LysM and putative peptidoglycan-binding domain-containing protein 1 (227 aa).

Phosphoserine occurs at positions 23 and 33. A LysM domain is found at leucine 40 to isoleucine 84. Residues asparagine 95–phenylalanine 157 are disordered. The span at aspartate 98–glutamate 108 shows a compositional bias: acidic residues. A Phosphoserine modification is found at serine 99. The span at glutamine 143 to leucine 152 shows a compositional bias: polar residues. 4 positions are modified to phosphoserine: serine 166, serine 181, serine 194, and serine 212. The tract at residues lysine 169 to leucine 227 is disordered. A compositionally biased stretch (basic and acidic residues) spans threonine 216–leucine 227.

This Rattus norvegicus (Rat) protein is LysM and putative peptidoglycan-binding domain-containing protein 1 (Lysmd1).